The chain runs to 268 residues: DNA repair protein RecO (268 aa).

This sequence belongs to the RecO family.

In terms of biological role, involved in DNA repair and RecF pathway recombination. The polypeptide is DNA repair protein RecO (Mycobacterium leprae (strain Br4923)).